The chain runs to 98 residues: MAQGQRKFQAQKPAKSKAAAAAASARNRGPRKGGRVIAPKKARIVQQQQLKKNLEVGIRKKIEHDVVMKASTSLPKKLALLKASTKKKEASSSTKMPA.

Disordered stretches follow at residues 1-38 and 73-98; these read MAQG…RVIA and SLPK…KMPA. A compositionally biased stretch (low complexity) spans 16 to 25; the sequence is SKAAAAAASA. The span at 28 to 38 shows a compositional bias: basic residues; the sequence is RGPRKGGRVIA. Residues 73–83 show a composition bias toward low complexity; the sequence is SLPKKLALLKA.

This sequence belongs to the UPF0390 family.

Its function is as follows. May have a potential role in hypercalcemia of malignancy. The sequence is that of Leydig cell tumor 10 kDa protein homolog from Bos taurus (Bovine).